The sequence spans 442 residues: MDSTVFINNPSLTLPFSYTFTSSSNSSTTTSTTTDSSSGQWMDGRIWSKLPPPLLDRVIAFLPPPAFFRTRCVCKRFYSLLFSNTFLETYLQLLPLRHNCFLFFKHKTLKSYIYKRGGTNDDDSNKAEGFLFDPNEIRWYRLSFAYIPSGFYPSGSSGGLVSWVSEEAGLKTILLCNPLVGSVSQLPPISRPRLFPSIGLSVTPTSIDVTVAGDDLISPYAVKNLSSESFHVDAGGFFSLWAMTSSLPRLCSLESGKMVYVQGKFYCMNYSPFSVLSYEVTGNRWIKIQAPMRRFLRSPSLLESKGRLILVAAVEKSKLNVPKSLRLWSLQQDNATWVEIERMPQPLYTQFAAEEGGKGFECVGNQEFVMIVLRGTSLQLLFDIVRKSWLWVPPCPYSGSGGGSSGGGSDGEVLQGFAYDPVLTTPVVSLLDQLTLPFPGVC.

Residues 1-85 (MDSTVFINNP…RFYSLLFSNT (85 aa)) are interaction with SKP1A. The region spanning 44-90 (GRIWSKLPPPLLDRVIAFLPPPAFFRTRCVCKRFYSLLFSNTFLETY) is the F-box domain.

Part of a putative SCF (ASK/Cullin/F-box) ubiquitin ligase complex. Interacts with SKP1A/ASK1, SKP1B/ASK2 and ASK11.

The protein resides in the nucleus. Its pathway is protein modification; protein ubiquitination. Functionally, component of SCF(ASK-cullin-F-box) E3 ubiquitin ligase complexes, which may mediate the ubiquitination and subsequent proteasomal degradation of target proteins. Considered as a meristem identity factor required for normal growth of the young floral meristem. Acts together with LEAFY to positively regulate the B class floral homeotic genes APETALA3 and PISTILLATA. In this way, operates as a region-specific regulator for petal and stamen development. Alternatively, may play a role as a negative regulator of the C class floral homeotic genes. Interacts together with the SKP1-like protein ASK1 to form a ubiquitin E3 ligase complex and could indirectly promote the ubiquitination and degradation of specific proteins controlling the floral primordia development like repressors of B class floral homeotic genes. The sequence is that of Protein UNUSUAL FLORAL ORGANS (UFO) from Arabidopsis thaliana (Mouse-ear cress).